Here is a 360-residue protein sequence, read N- to C-terminus: Histidinol-phosphate aminotransferase 2 (360 aa).

An N6-(pyridoxal phosphate)lysine modification is found at Lys218.

This sequence belongs to the class-II pyridoxal-phosphate-dependent aminotransferase family. Histidinol-phosphate aminotransferase subfamily. In terms of assembly, homodimer. Requires pyridoxal 5'-phosphate as cofactor.

It catalyses the reaction L-histidinol phosphate + 2-oxoglutarate = 3-(imidazol-4-yl)-2-oxopropyl phosphate + L-glutamate. Its pathway is amino-acid biosynthesis; L-histidine biosynthesis; L-histidine from 5-phospho-alpha-D-ribose 1-diphosphate: step 7/9. This is Histidinol-phosphate aminotransferase 2 from Nitrosococcus oceani (strain ATCC 19707 / BCRC 17464 / JCM 30415 / NCIMB 11848 / C-107).